A 397-amino-acid polypeptide reads, in one-letter code: MTTLLNPYFGEFGGMYVPQILMPALRQLEEAFVSAQKDPEFQAQFNDLLKNYAGRPTALTKCQNITAGTNTTLYLKREDLLHGGAHKTNQVLGQALLAKRMGKTEIIAETGAGQHGVASALASALLGLKCRIYMGAKDVERQSPNVFRMRLMGAEVIPVHSGSATLKDACNEALRDWSGSYETAHYMLGTAAGPHPYPTIVREFQRMIGEETKAQILEREGRLPDAVIACVGGGSNAIGMFADFINETDVGLIGVEPGGHGIETGEHGAPLKHGRVGIYFGMKAPMMQTEDGQIEESYSISAGLDFPSVGPQHAYLNSTGRADYVSITDDEALEAFKTLCLHEGIIPALESSHALAHALKMMRENPEKEQLLVVNLSGRGDKDIFTVHDILKARGEI.

K87 carries the N6-(pyridoxal phosphate)lysine modification.

Belongs to the TrpB family. In terms of assembly, tetramer of two alpha and two beta chains. It depends on pyridoxal 5'-phosphate as a cofactor.

It carries out the reaction (1S,2R)-1-C-(indol-3-yl)glycerol 3-phosphate + L-serine = D-glyceraldehyde 3-phosphate + L-tryptophan + H2O. The protein operates within amino-acid biosynthesis; L-tryptophan biosynthesis; L-tryptophan from chorismate: step 5/5. Functionally, the beta subunit is responsible for the synthesis of L-tryptophan from indole and L-serine. In Escherichia coli O127:H6 (strain E2348/69 / EPEC), this protein is Tryptophan synthase beta chain.